The sequence spans 319 residues: Annexin A4 (319 aa).

At T7 the chain carries Phosphothreonine. Position 12 is a phosphoserine (S12). 4 Annexin repeats span residues 14–85 (FNAT…GLMT), 86–157 (PTVL…SLSA), 169–241 (ALMK…AIVK), and 245–316 (SKPS…VLCG). Residues K213, K293, and K300 each carry the N6-acetyllysine modification.

The protein belongs to the annexin family.

The protein localises to the zymogen granule membrane. In terms of biological role, calcium/phospholipid-binding protein which promotes membrane fusion and is involved in exocytosis. The chain is Annexin A4 (Anxa4) from Mus musculus (Mouse).